The primary structure comprises 67 residues: Brevinin-1CDYa (67 aa).

A signal peptide spans 1–22; that stretch reads MFTLKKSLLLIFFLGTINLSLC. The propeptide occupies 23-45; it reads EEERNADEEERRDDLEERDVEVE. Cys-61 and Cys-67 are disulfide-bonded.

This sequence belongs to the frog skin active peptide (FSAP) family. Brevinin subfamily. As to expression, expressed by the skin glands.

It localises to the secreted. In terms of biological role, antimicrobial peptide. Has low activity against the Gram-positive bacterium S.aureus (MIC=12.5 uM) and the Gram-negative bacterium E.coli (MIC=25 uM). Has weak hemolytic activity against human erythrocytes. The chain is Brevinin-1CDYa from Rana dybowskii (Dybovsky's frog).